A 361-amino-acid chain; its full sequence is Ribosomal RNA large subunit methyltransferase M (361 aa).

Residues Ser-193, 226 to 229 (CPGG), Asp-245, Asp-265, and Asp-283 each bind S-adenosyl-L-methionine. The Proton acceptor role is filled by Lys-312.

It belongs to the class I-like SAM-binding methyltransferase superfamily. RNA methyltransferase RlmE family. RlmM subfamily. In terms of assembly, monomer.

The protein localises to the cytoplasm. It carries out the reaction cytidine(2498) in 23S rRNA + S-adenosyl-L-methionine = 2'-O-methylcytidine(2498) in 23S rRNA + S-adenosyl-L-homocysteine + H(+). Functionally, catalyzes the 2'-O-methylation at nucleotide C2498 in 23S rRNA. This chain is Ribosomal RNA large subunit methyltransferase M, found in Histophilus somni (strain 2336) (Haemophilus somnus).